The sequence spans 345 residues: Phosphoribosylformylglycinamidine cyclo-ligase (345 aa).

It belongs to the AIR synthase family.

The protein localises to the cytoplasm. The catalysed reaction is 2-formamido-N(1)-(5-O-phospho-beta-D-ribosyl)acetamidine + ATP = 5-amino-1-(5-phospho-beta-D-ribosyl)imidazole + ADP + phosphate + H(+). Its pathway is purine metabolism; IMP biosynthesis via de novo pathway; 5-amino-1-(5-phospho-D-ribosyl)imidazole from N(2)-formyl-N(1)-(5-phospho-D-ribosyl)glycinamide: step 2/2. This chain is Phosphoribosylformylglycinamidine cyclo-ligase, found in Limosilactobacillus reuteri (strain DSM 20016) (Lactobacillus reuteri).